A 546-amino-acid polypeptide reads, in one-letter code: Chaperonin GroEL (546 aa).

Residues 29–32 (TMGP), Lys50, 86–90 (DGTTT), Gly414, and Asp492 contribute to the ATP site.

Belongs to the chaperonin (HSP60) family. Forms a cylinder of 14 subunits composed of two heptameric rings stacked back-to-back. Interacts with the co-chaperonin GroES.

It localises to the cytoplasm. The catalysed reaction is ATP + H2O + a folded polypeptide = ADP + phosphate + an unfolded polypeptide.. Its function is as follows. Together with its co-chaperonin GroES, plays an essential role in assisting protein folding. The GroEL-GroES system forms a nano-cage that allows encapsulation of the non-native substrate proteins and provides a physical environment optimized to promote and accelerate protein folding. The sequence is that of Chaperonin GroEL from Helicobacter pylori (strain G27).